Consider the following 417-residue polypeptide: Phosphoglycerate kinase 1 (417 aa).

Ser2 is modified (N-acetylserine). A phosphoserine mark is found at Ser2 and Ser4. An N6-succinyllysine modification is found at Lys6. Residue Lys11 is modified to N6-acetyllysine. The (2R)-3-phosphoglycerate site is built by Val23, Asp24, Phe25, Asn26, Gln38, Arg39, Ser62, His63, Gly65, and Arg66. The mitochondrial targeting region exposed following cis-trans isomerization by PIN1 and recognized by the TOM complex for mitochondrial translocation of the protein stretch occupies residues 38–43; sequence QRIKAA. Lys75 is subject to N6-acetyllysine. Position 76 is a phosphotyrosine (Tyr76). N6-acetyllysine is present on residues Lys86 and Lys91. The residue at position 97 (Lys97) is an N6-(2-hydroxyisobutyryl)lysine; alternate. The residue at position 97 (Lys97) is an N6-acetyllysine; alternate. (2R)-3-phosphoglycerate is bound by residues Leu122 and Arg123. Lys131 carries the N6-acetyllysine; alternate modification. Lys131 is modified (N6-malonyllysine; alternate). An N6-acetyllysine modification is found at Lys146. Positions 170 and 171 each coordinate (2R)-3-phosphoglycerate. The residue at position 191 (Lys191) is an N6-succinyllysine. The residue at position 196 (Tyr196) is a Phosphotyrosine. Lys199 carries the post-translational modification N6-acetyllysine. Residue Ser203 is modified to Phosphoserine. Gly214 lines the ADP pocket. Gly214 contributes to the CDP binding site. Residues Ala215 and Lys216 each coordinate AMP. Ala215 is an ATP binding site. Ala215 provides a ligand contact to Mg(2+). Lys216 is subject to N6-(2-hydroxyisobutyryl)lysine. Mg(2+) contacts are provided by Ala218 and Asp219. Asp219 contacts CDP. Lys220 is an AMP binding site. Residue Lys220 participates in ATP binding. Lys220 bears the N6-(2-hydroxyisobutyryl)lysine mark. Gly238 is an ADP binding site. A CDP-binding site is contributed by Gly238. An AMP-binding site is contributed by Gly239. Gly239 contacts ATP. Lys267 and Lys291 each carry N6-acetyllysine. Gly313 lines the AMP pocket. Gly313 provides a ligand contact to ATP. The residue at position 323 (Lys323) is an N6-(2-hydroxyisobutyryl)lysine. Residues Gly338, Val340, and Phe343 each coordinate CDP. Phe343 lines the ADP pocket. AMP is bound at residue Glu344. The ATP site is built by Glu344, Asp375, and Thr376. Residue Asp375 coordinates Mg(2+).

It belongs to the phosphoglycerate kinase family. Monomer. Interacts with kinase MAPK1/ERK2; the interaction is direct, occurs under hypoxic conditions, and promotes its interaction with PIN1. Interacts with peptidyl-prolyl cis-trans isomerase PIN1; the interaction is direct, occurs under hypoxic conditions, and targets the protein to the mitochondrion by promoting interactions with the TOM complex. Interacts with mitochondrial circRNA mcPGK1 (via its 2nd stem-loop); the interaction is direct and targets the protein to the mitochondrion by promoting interactions with the TOM complex. Interacts with pyruvate dehydrogenase kinase PDK1; the interaction is direct, occurs under hypoxic conditions and leads to PDK1-mediated inhibition of pyruvate dehydrogenase complex activity. Mg(2+) serves as cofactor. Post-translationally, phosphorylated at Ser-203 by MAPK1/ERK2 under hypoxic conditions, which promotes its mitochondrial targeting.

It is found in the cytoplasm. The protein localises to the cytosol. Its subcellular location is the mitochondrion matrix. It catalyses the reaction (2R)-3-phosphoglycerate + ATP = (2R)-3-phospho-glyceroyl phosphate + ADP. The enzyme catalyses L-seryl-[protein] + ATP = O-phospho-L-seryl-[protein] + ADP + H(+). The protein operates within carbohydrate degradation; glycolysis; pyruvate from D-glyceraldehyde 3-phosphate: step 2/5. Catalyzes one of the two ATP producing reactions in the glycolytic pathway via the reversible conversion of 1,3-diphosphoglycerate to 3-phosphoglycerate. Both L- and D- forms of purine and pyrimidine nucleotides can be used as substrates, but the activity is much lower on pyrimidines. In addition to its role as a glycolytic enzyme, it seems that PGK-1 acts as a polymerase alpha cofactor protein (primer recognition protein). Acts as a protein kinase when localized to the mitochondrion where it phosphorylates pyruvate dehydrogenase kinase PDK1 to inhibit pyruvate dehydrogenase complex activity and suppress the formation of acetyl-coenzyme A from pyruvate, and consequently inhibit oxidative phosphorylation and promote glycolysis. May play a role in sperm motility. The protein is Phosphoglycerate kinase 1 (PGK1) of Notamacropus eugenii (Tammar wallaby).